A 349-amino-acid polypeptide reads, in one-letter code: Outer membrane protein assembly factor BamC (349 aa).

A signal peptide spans 1–24 (MAILLQKSKVMKIAGMSLAMLLAA). The N-palmitoyl cysteine moiety is linked to residue Cys25. Residue Cys25 is the site of S-diacylglycerol cysteine attachment.

The protein belongs to the BamC family. As to quaternary structure, part of the Bam complex, which is composed of the outer membrane protein BamA, and four lipoproteins BamB, BamC, BamD and BamE.

Its subcellular location is the cell outer membrane. In terms of biological role, part of the outer membrane protein assembly complex, which is involved in assembly and insertion of beta-barrel proteins into the outer membrane. This Photorhabdus asymbiotica subsp. asymbiotica (strain ATCC 43949 / 3105-77) (Xenorhabdus luminescens (strain 2)) protein is Outer membrane protein assembly factor BamC.